The sequence spans 318 residues: Electron transfer flavoprotein subunit alpha (318 aa).

257 to 285 serves as a coordination point for FAD; that stretch reads LYIALGISGAIQHRAGMQTSKTIVAVNKD.

It belongs to the ETF alpha-subunit/FixB family. As to quaternary structure, heterodimer of an alpha and a beta subunit. FAD is required as a cofactor.

Its function is as follows. The electron transfer flavoprotein serves as a specific electron acceptor for other dehydrogenases. It transfers the electrons to the main respiratory chain via ETF-ubiquinone oxidoreductase (ETF dehydrogenase). In Mycobacterium tuberculosis (strain CDC 1551 / Oshkosh), this protein is Electron transfer flavoprotein subunit alpha (etfA).